Reading from the N-terminus, the 390-residue chain is Homeobox protein Hox-B2a (390 aa).

Disordered stretches follow at residues 40–73, 81–100, 108–155, and 211–338; these read STAIPPPFEHTIPSLSPCTGNQARPRSQKRTASN, TAPPTQHQQGPAPLSGGAPL, KEKK…LDNV, and MKHK…SLPD. Residues 52–73 are compositionally biased toward polar residues; it reads PSLSPCTGNQARPRSQKRTASN. The Antp-type hexapeptide signature appears at 103-108; it reads EFPWMK. The span at 118-135 shows a compositional bias: low complexity; it reads KPGATAAAAAASPSQASS. Positions 158–217 form a DNA-binding region, homeobox; it reads SRRLRTAYTNTQLLELEKEFHFNKYLCRPRRVEIAALLDLTERQVKVWFQNRRMKHKRQT. Low complexity predominate over residues 244 to 262; that stretch reads SSQSLEVSGSGSAAPSESE. Polar residues predominate over residues 263 to 290; that stretch reads TCPTTAAYTNSSDKSQPTPEEGQASQPE.

This sequence belongs to the Antp homeobox family. Proboscipedia subfamily.

It localises to the nucleus. Its function is as follows. Sequence-specific transcription factor which is part of a developmental regulatory system that provides cells with specific positional identities on the anterior-posterior axis. Plays an important role in the patterning of hindbrain and pharyngeal arches. This chain is Homeobox protein Hox-B2a (hoxb2a), found in Danio rerio (Zebrafish).